Here is a 447-residue protein sequence, read N- to C-terminus: Drebrin-like protein A (447 aa).

One can recognise an ADF-H domain in the interval 2-133; the sequence is SVNLSKNGAA…EPESIMEKVA (132 aa). 2 disordered regions span residues 141–160 and 184–368; these read NFHKESKRGNEGPQGPVGSV and KDEE…TENQ. A coiled-coil region spans residues 180–245; the sequence is AKAEKDEEER…EQEETEKQQT (66 aa). Over residues 184–242 the composition is skewed to basic and acidic residues; that stretch reads KDEEERRMEENRRANSEKDRLERERKEREQREAETREQRFRERAKEIDAQRKEQEETEK. Positions 246 to 255 are enriched in polar residues; that stretch reads VPASQRSVNP. Pro residues predominate over residues 319–328; sequence PESPVPPVSH. Residues 345–365 are compositionally biased toward acidic residues; the sequence is QEEENIYQDATEDQNIYEDTT. In terms of domain architecture, SH3 spans 388–447; it reads EKGVCARALYDYQAADDTEISFDPDDLITQIQFIDEGWWRGFSPAGHFGMFPANYVELLE.

This sequence belongs to the ABP1 family.

It is found in the cytoplasm. It localises to the cytoskeleton. The protein localises to the cell projection. Its subcellular location is the lamellipodium. The protein resides in the ruffle. It is found in the cell cortex. It localises to the cytosol. The protein localises to the synapse. Its subcellular location is the perikaryon. The protein resides in the neuron projection. It is found in the cell membrane. It localises to the cytoplasmic vesicle. The protein localises to the clathrin-coated vesicle membrane. Its subcellular location is the golgi apparatus membrane. The protein resides in the podosome. It is found in the early endosome. It localises to the dendrite. The protein localises to the postsynaptic density. Functionally, adapter protein that binds F-actin and dynamin, and thereby plays a role in receptor-mediated endocytosis. Plays a role in the reorganization of the actin cytoskeleton, formation of cell projections, such as neurites, in neuron morphogenesis and synapse formation. Does not bind G-actin and promote actin polymerization by itself, but excerts its functions by interaction with other proteins. Required for the formation of organized podosome rosettes. The protein is Drebrin-like protein A (dbnl-a) of Xenopus laevis (African clawed frog).